The sequence spans 204 residues: Large ribosomal subunit protein uL4 (204 aa).

Over residues 42 to 55 the composition is skewed to polar residues; that stretch reads GSRQGSKAQKNRSA. Positions 42-85 are disordered; that stretch reads GSRQGSKAQKNRSAVSGGGKRPWAQKGTGRARAGTTRGPIWRSG. A compositionally biased stretch (low complexity) spans 68 to 79; that stretch reads GTGRARAGTTRG.

This sequence belongs to the universal ribosomal protein uL4 family. Part of the 50S ribosomal subunit.

One of the primary rRNA binding proteins, this protein initially binds near the 5'-end of the 23S rRNA. It is important during the early stages of 50S assembly. It makes multiple contacts with different domains of the 23S rRNA in the assembled 50S subunit and ribosome. Functionally, forms part of the polypeptide exit tunnel. This Vesicomyosocius okutanii subsp. Calyptogena okutanii (strain HA) protein is Large ribosomal subunit protein uL4.